The following is a 434-amino-acid chain: NFATC2-interacting protein (434 aa).

2 disordered regions span residues 1–63 (MGSP…TPAL) and 176–237 (GSED…RAYN). Residues 28–59 (GPQPCPKPRGPQPCPKPRGPQPCPKPRGPQPC) show a composition bias toward pro residues. A compositionally biased stretch (basic residues) spans 228–237 (PVRRKGRAYN). Positions 275–351 (PELTVKVRRG…IDCVVLSPPD (77 aa)) constitute a Ubiquitin-like domain.

The protein resides in the nucleus. Its subcellular location is the cytoplasm. Functionally, regulates the magnitude of NFAT-driven transcription of a specific subset of cytokine genes. This Xenopus tropicalis (Western clawed frog) protein is NFATC2-interacting protein (nfatc2ip).